The primary structure comprises 179 residues: Large ribosomal subunit protein uL5 (179 aa).

It belongs to the universal ribosomal protein uL5 family. In terms of assembly, part of the 50S ribosomal subunit; part of the 5S rRNA/L5/L18/L25 subcomplex. Contacts the 5S rRNA and the P site tRNA. Forms a bridge to the 30S subunit in the 70S ribosome.

Its function is as follows. This is one of the proteins that bind and probably mediate the attachment of the 5S RNA into the large ribosomal subunit, where it forms part of the central protuberance. In the 70S ribosome it contacts protein S13 of the 30S subunit (bridge B1b), connecting the 2 subunits; this bridge is implicated in subunit movement. Contacts the P site tRNA; the 5S rRNA and some of its associated proteins might help stabilize positioning of ribosome-bound tRNAs. This Bordetella bronchiseptica (strain ATCC BAA-588 / NCTC 13252 / RB50) (Alcaligenes bronchisepticus) protein is Large ribosomal subunit protein uL5.